A 514-amino-acid chain; its full sequence is MDKLQRDGKEDTPRQRRFLYPLLFQEDLYAIAYDHYFNRSSSFEPMENSSSNDRFSFLTVKRLISRIRQQNGSIVPFVNCDQTKLVGHNRSFYSELVLGGLTAVPEVPLSIRSKHSLERMNEWTSFRSIHSIFPLMEDKIPHSNFILDIRIPHLTHPEILVRTFRRWIQDAPSLHSLRSVLHEHRNLIISSNLDQLILIASKENTRLSLFLWNYYAYECESLLVPLWKRFFYSRSLPYESFIERTPFYRKIEHIVIFYHKYLKKSLWFLKDPSIHYVKHRERSIIALRGTYLLAKKWRYHITKFWQCHFHLWPQPYRIYIDELSNNCFSFLGYLLSVKMKTSVVRIKMPDDSFITDLITKEFDPIAPTTLLIGSLAKEKFCDISGHPISRLAWTGLTDDDILDRFDRIWRNIFHYHSGSSKKDGLYRMKYILRLPCAKTLACKHKSAIRVVRERFGSELFTKSSPKERESIFLSFSKTRSQRERIWHSDIIQINPLINSCRKKHNLQIEPLFDR.

This sequence belongs to the intron maturase 2 family. MatK subfamily.

The protein resides in the plastid. The protein localises to the chloroplast. Usually encoded in the trnK tRNA gene intron. Probably assists in splicing its own and other chloroplast group II introns. This chain is Maturase K, found in Encephalartos altensteinii (Altenstein's bread tree).